Here is a 631-residue protein sequence, read N- to C-terminus: Phosphomethylpyrimidine synthase (631 aa).

Residues Asn239, Met268, Tyr297, His333, 353–355, 394–397, and Glu433 contribute to the substrate site; these read SRG and DGLR. His437 is a Zn(2+) binding site. Tyr460 provides a ligand contact to substrate. His501 lines the Zn(2+) pocket. Residues Cys581, Cys584, and Cys589 each coordinate [4Fe-4S] cluster.

The protein belongs to the ThiC family. In terms of assembly, homodimer. It depends on [4Fe-4S] cluster as a cofactor.

The catalysed reaction is 5-amino-1-(5-phospho-beta-D-ribosyl)imidazole + S-adenosyl-L-methionine = 4-amino-2-methyl-5-(phosphooxymethyl)pyrimidine + CO + 5'-deoxyadenosine + formate + L-methionine + 3 H(+). The protein operates within cofactor biosynthesis; thiamine diphosphate biosynthesis. In terms of biological role, catalyzes the synthesis of the hydroxymethylpyrimidine phosphate (HMP-P) moiety of thiamine from aminoimidazole ribotide (AIR) in a radical S-adenosyl-L-methionine (SAM)-dependent reaction. The sequence is that of Phosphomethylpyrimidine synthase from Escherichia coli O127:H6 (strain E2348/69 / EPEC).